Consider the following 314-residue polypeptide: Oxaloacetate tautomerase FAHD2A, mitochondrial (314 aa).

Residues 1–84 (MLVSGRRRLL…ATLSVARRAL (84 aa)) constitute a mitochondrion transit peptide. Residues Glu-159, Glu-161, and Asp-190 each contribute to the Mg(2+) site.

This sequence belongs to the FAH family. Mg(2+) serves as cofactor. Requires Mn(2+) as cofactor.

It is found in the mitochondrion. The catalysed reaction is oxaloacetate = enol-oxaloacetate. Functionally, tautomerase that converts enol-oxaloacetate, a strong inhibitor of succinate dehydrogenase, to the physiological keto form of oxaloacetate. It is thereby required to maximize aerobic respiration efficiency by preventing succinate dehydrogenase inhibition. This chain is Oxaloacetate tautomerase FAHD2A, mitochondrial, found in Homo sapiens (Human).